Reading from the N-terminus, the 419-residue chain is Tyrosine--tRNA ligase (419 aa).

Tyr42 provides a ligand contact to L-tyrosine. The short motif at 47–56 (CTAPSLHVGS) is the 'HIGH' region element. The L-tyrosine site is built by Tyr179 and Gln183. Residues 239 to 243 (KMGKT) carry the 'KMSKS' region motif. Lys242 is an ATP binding site. In terms of domain architecture, S4 RNA-binding spans 353 to 419 (LGVLAAFVKA…RKRHVLLKLV (67 aa)).

This sequence belongs to the class-I aminoacyl-tRNA synthetase family. TyrS type 1 subfamily. Homodimer.

It localises to the cytoplasm. The enzyme catalyses tRNA(Tyr) + L-tyrosine + ATP = L-tyrosyl-tRNA(Tyr) + AMP + diphosphate + H(+). In terms of biological role, catalyzes the attachment of tyrosine to tRNA(Tyr) in a two-step reaction: tyrosine is first activated by ATP to form Tyr-AMP and then transferred to the acceptor end of tRNA(Tyr). This Methylocella silvestris (strain DSM 15510 / CIP 108128 / LMG 27833 / NCIMB 13906 / BL2) protein is Tyrosine--tRNA ligase.